The chain runs to 260 residues: Hydroxyethylthiazole kinase 1 (260 aa).

M39 provides a ligand contact to substrate. R115 and T160 together coordinate ATP. G187 serves as a coordination point for substrate.

This sequence belongs to the Thz kinase family. Requires Mg(2+) as cofactor.

It carries out the reaction 5-(2-hydroxyethyl)-4-methylthiazole + ATP = 4-methyl-5-(2-phosphooxyethyl)-thiazole + ADP + H(+). It participates in cofactor biosynthesis; thiamine diphosphate biosynthesis; 4-methyl-5-(2-phosphoethyl)-thiazole from 5-(2-hydroxyethyl)-4-methylthiazole: step 1/1. Functionally, catalyzes the phosphorylation of the hydroxyl group of 4-methyl-5-beta-hydroxyethylthiazole (THZ). The chain is Hydroxyethylthiazole kinase 1 from Streptococcus pneumoniae serotype 4 (strain ATCC BAA-334 / TIGR4).